The primary structure comprises 445 residues: Argininosuccinate synthase (445 aa).

ATP is bound by residues 17 to 25 (AFSGGLDTS) and alanine 43. Tyrosine 99 contributes to the L-citrulline binding site. ATP contacts are provided by glycine 129 and threonine 131. L-aspartate is bound by residues threonine 131, asparagine 135, and aspartate 136. Residue asparagine 135 coordinates L-citrulline. Aspartate 136 serves as a coordination point for ATP. L-citrulline contacts are provided by arginine 139 and serine 192. Aspartate 194 provides a ligand contact to ATP. 3 residues coordinate L-citrulline: threonine 201, glutamate 203, and glutamate 280.

Belongs to the argininosuccinate synthase family. Type 2 subfamily. Homotetramer.

It is found in the cytoplasm. The enzyme catalyses L-citrulline + L-aspartate + ATP = 2-(N(omega)-L-arginino)succinate + AMP + diphosphate + H(+). Its pathway is amino-acid biosynthesis; L-arginine biosynthesis; L-arginine from L-ornithine and carbamoyl phosphate: step 2/3. This is Argininosuccinate synthase from Burkholderia cenocepacia (strain HI2424).